The primary structure comprises 282 residues: tRNA pseudouridine synthase A (282 aa).

Residue D61 is the Nucleophile of the active site. Residue Y119 participates in substrate binding.

It belongs to the tRNA pseudouridine synthase TruA family. In terms of assembly, homodimer.

It carries out the reaction uridine(38/39/40) in tRNA = pseudouridine(38/39/40) in tRNA. Functionally, formation of pseudouridine at positions 38, 39 and 40 in the anticodon stem and loop of transfer RNAs. In Nostoc sp. (strain PCC 7120 / SAG 25.82 / UTEX 2576), this protein is tRNA pseudouridine synthase A.